A 278-amino-acid polypeptide reads, in one-letter code: Cation-dependent mannose-6-phosphate receptor (278 aa).

The signal sequence occupies residues 1–21; it reads MFPLSGCWRTELLLLLLLAVA. Residues 22-188 are Lumenal-facing; it reads VRESWQIEEK…ACSPEVSHLS (167 aa). An MRH domain is found at 31–182; that stretch reads KSCDLVGEKD…EMDSSLACSP (152 aa). A disulfide bond links C33 and C79. N-linked (GlcNAc...) asparagine glycosylation is found at N58, N84, N95, N108, and N114. Cystine bridges form between C133-C168 and C146-C180. The helical transmembrane segment at 189 to 209 threads the bilayer; that stretch reads VGSILLVIFASLVAVYIIGGF. At 210-278 the chain is on the cytoplasmic side; the sequence is LYQRLVVGAK…EERDDHLLPM (69 aa). A disordered region spans residues 256–278; sequence YRGVGDDQLGEESEERDDHLLPM. S268 is subject to Phosphoserine.

In terms of assembly, homodimer. Binds GGA1, GGA2 and GGA3.

The protein localises to the lysosome membrane. Transport of phosphorylated lysosomal enzymes from the Golgi complex and the cell surface to lysosomes. Lysosomal enzymes bearing phosphomannosyl residues bind specifically to mannose-6-phosphate receptors in the Golgi apparatus and the resulting receptor-ligand complex is transported to an acidic prelyosomal compartment where the low pH mediates the dissociation of the complex. The sequence is that of Cation-dependent mannose-6-phosphate receptor (M6pr) from Rattus norvegicus (Rat).